The primary structure comprises 115 residues: Large ribosomal subunit protein bL19 (115 aa).

The protein belongs to the bacterial ribosomal protein bL19 family.

Its function is as follows. This protein is located at the 30S-50S ribosomal subunit interface and may play a role in the structure and function of the aminoacyl-tRNA binding site. This is Large ribosomal subunit protein bL19 from Desulforudis audaxviator (strain MP104C).